Reading from the N-terminus, the 171-residue chain is Large ribosomal subunit protein bL9 (171 aa).

It belongs to the bacterial ribosomal protein bL9 family.

Its function is as follows. Binds to the 23S rRNA. The polypeptide is Large ribosomal subunit protein bL9 (Rickettsia typhi (strain ATCC VR-144 / Wilmington)).